We begin with the raw amino-acid sequence, 584 residues long: Lamin-B1 (584 aa).

A disordered region spans residues 1–22; sequence MAAAVAPLSPQPRGAAASAALS. The interval 2–33 is head; that stretch reads AAAVAPLSPQPRGAAASAALSPTRISRLQEKE. Position 22 is a phosphoserine (Ser-22). In terms of domain architecture, IF rod spans 31–387; sequence EKEELRQLND…KLLESEEERL (357 aa). Residues 34-70 are coil 1A; sequence ELRQLNDRLAVYIDKVRSLETENSALQRRVSEREQVC. Positions 81-218 are coil 1B; sequence FETELADARK…NVYEEEIKET (138 aa). Positions 243 to 385 are coil 2; it reads QALKEIREQH…YRKLLESEEE (143 aa). Residues 386–584 form a tail region; the sequence is RLRLSPGPSS…RKPERSCVVM (199 aa). Disordered stretches follow at residues 388 to 431 and 548 to 584; these read RLSP…SVSI and TVNE…CVVM. Low complexity predominate over residues 394 to 408; sequence SSRVTVSRASSSRSV. Residues 414–419 carry the Nuclear localization signal motif; that stretch reads KRKRID. The LTD domain maps to 429 to 545; the sequence is VSISHSASAT…EEVAQRSTVF (117 aa). Positions 551–565 are enriched in acidic residues; that stretch reads EGEEEEEEGEEEILE. Residues 575–584 are compositionally biased toward basic and acidic residues; the sequence is RKPERSCVVM. Cys-581 carries the cysteine methyl ester modification. Cys-581 carries S-farnesyl cysteine lipidation. The propeptide at 582–584 is removed in mature form; it reads VVM.

It belongs to the intermediate filament family. As to quaternary structure, homodimer. Lamin dimers then assemble into dimeric head-to-tail polymers. Ultimately, two head-to-tail polymers assemble laterally into a protofilament with a uniformly shaped rod of 3.5 nm in diameter. Phosphorylation plays a key role in lamin organization, subcellular localization and nuclear envelope disintegration. Phosphorylation by CDK1 at Ser-22 at the onset of mitosis drives lamin disassembly and nuclear envelope breakdown.

The protein localises to the nucleus lamina. It localises to the nucleus envelope. Its subcellular location is the nucleus. It is found in the nucleoplasm. The protein resides in the nucleus matrix. Lamins are intermediate filament proteins that assemble into a filamentous meshwork, and which constitute the major components of the nuclear lamina, a fibrous layer on the nucleoplasmic side of the inner nuclear membrane. Lamins provide a framework for the nuclear envelope, bridging the nuclear envelope and chromatin. Plays an important role in nuclear assembly, chromatin organization, nuclear membrane and telomere dynamics. In Gallus gallus (Chicken), this protein is Lamin-B1 (LMNB1).